The following is a 745-amino-acid chain: Photosystem I P700 chlorophyll a apoprotein A2 (745 aa).

8 helical membrane-spanning segments follow: residues leucine 49 to alanine 72, leucine 138 to glutamine 161, leucine 178 to isoleucine 202, methionine 276 to tyrosine 294, leucine 338 to tyrosine 361, alanine 377 to valine 403, alanine 425 to histidine 447, and phenylalanine 528 to valine 546. The [4Fe-4S] cluster site is built by cysteine 570 and cysteine 579. 2 helical membrane passes run alanine 586–tryptophan 607 and leucine 654–isoleucine 676. Residues histidine 665, methionine 673, and tyrosine 681 each coordinate chlorophyll a. Tryptophan 682 is a phylloquinone binding site. A helical transmembrane segment spans residues leucine 718–alanine 738.

It belongs to the PsaA/PsaB family. The PsaA/B heterodimer binds the P700 chlorophyll special pair and subsequent electron acceptors. PSI consists of a core antenna complex that captures photons, and an electron transfer chain that converts photonic excitation into a charge separation. The cyanobacterial PSI reaction center is composed of one copy each of PsaA,B,C,D,E,F,I,J,K,L,M and X, and forms trimeric complexes. It depends on PSI electron transfer chain: 5 chlorophyll a, 1 chlorophyll a', 2 phylloquinones and 3 4Fe-4S clusters. PSI core antenna: 90 chlorophyll a, 22 carotenoids, 3 phospholipids and 1 galactolipid. P700 is a chlorophyll a/chlorophyll a' dimer, A0 is one or more chlorophyll a, A1 is one or both phylloquinones and FX is a shared 4Fe-4S iron-sulfur center. as a cofactor.

Its subcellular location is the cellular thylakoid membrane. The catalysed reaction is reduced [plastocyanin] + hnu + oxidized [2Fe-2S]-[ferredoxin] = oxidized [plastocyanin] + reduced [2Fe-2S]-[ferredoxin]. Functionally, psaA and PsaB bind P700, the primary electron donor of photosystem I (PSI), as well as the electron acceptors A0, A1 and FX. PSI is a plastocyanin/cytochrome c6-ferredoxin oxidoreductase, converting photonic excitation into a charge separation, which transfers an electron from the donor P700 chlorophyll pair to the spectroscopically characterized acceptors A0, A1, FX, FA and FB in turn. Oxidized P700 is reduced on the lumenal side of the thylakoid membrane by plastocyanin or cytochrome c6. This chain is Photosystem I P700 chlorophyll a apoprotein A2, found in Synechococcus sp. (strain JA-3-3Ab) (Cyanobacteria bacterium Yellowstone A-Prime).